The following is a 247-amino-acid chain: OCIA domain-containing protein 1 (247 aa).

The OCIA domain occupies 1-112 (MNGRADFREP…KKLENSPLGE (112 aa)). Phosphoserine occurs at positions 108 and 116. Residues 116 to 247 (SGELRRSLPP…VNKYGDTWDE (132 aa)) form a disordered region. Polar residues-rich tracts occupy residues 136–146 (SNVSGQSSFGT) and 168–177 (ASMNESTPTG). Basic and acidic residues-rich tracts occupy residues 192 to 210 (DSPKRKSVTYEELRNKNRE) and 218 to 240 (HKTDPSVRPMQERGPQKEVKVNK). Residues Ser-193 and Ser-198 each carry the phosphoserine modification.

It belongs to the OCIAD1 family. Interacts with OCIAD2. Interacts with STAT3.

The protein resides in the endosome. In terms of biological role, maintains stem cell potency. Increases STAT3 phosphorylation and controls ERK phosphorylation. May act as a scaffold, increasing STAT3 recruitment onto endosomes. This is OCIA domain-containing protein 1 from Rattus norvegicus (Rat).